Here is a 275-residue protein sequence, read N- to C-terminus: Ribosomal RNA small subunit methyltransferase A (275 aa).

The S-adenosyl-L-methionine site is built by asparagine 28, leucine 30, glycine 55, glutamate 77, aspartate 103, and asparagine 123.

Belongs to the class I-like SAM-binding methyltransferase superfamily. rRNA adenine N(6)-methyltransferase family. RsmA subfamily.

It is found in the cytoplasm. It catalyses the reaction adenosine(1518)/adenosine(1519) in 16S rRNA + 4 S-adenosyl-L-methionine = N(6)-dimethyladenosine(1518)/N(6)-dimethyladenosine(1519) in 16S rRNA + 4 S-adenosyl-L-homocysteine + 4 H(+). Its function is as follows. Specifically dimethylates two adjacent adenosines (A1518 and A1519) in the loop of a conserved hairpin near the 3'-end of 16S rRNA in the 30S particle. May play a critical role in biogenesis of 30S subunits. The chain is Ribosomal RNA small subunit methyltransferase A from Rhizobium etli (strain CIAT 652).